A 527-amino-acid polypeptide reads, in one-letter code: Putative ribose/galactose/methyl galactoside import ATP-binding protein 2 (527 aa).

Residues 1–31 form a disordered region; that stretch reads MFTARVARPMAGDDAPAASSGSTGSSAPPAS. A compositionally biased stretch (low complexity) spans 12 to 31; that stretch reads GDDAPAASSGSTGSSAPPAS. 2 ABC transporter domains span residues 38-274 and 284-523; these read LEVR…VGRE and VPIG…RIMD. 70–77 contacts ATP; it reads GENGAGKS.

It belongs to the ABC transporter superfamily. Carbohydrate importer 2 (CUT2) (TC 3.A.1.2) family.

It is found in the cell inner membrane. It carries out the reaction D-ribose(out) + ATP + H2O = D-ribose(in) + ADP + phosphate + H(+). The catalysed reaction is D-galactose(out) + ATP + H2O = D-galactose(in) + ADP + phosphate + H(+). Its function is as follows. Part of an ABC transporter complex involved in carbohydrate import. Could be involved in ribose, galactose and/or methyl galactoside import. Responsible for energy coupling to the transport system. In Burkholderia lata (strain ATCC 17760 / DSM 23089 / LMG 22485 / NCIMB 9086 / R18194 / 383), this protein is Putative ribose/galactose/methyl galactoside import ATP-binding protein 2.